The primary structure comprises 281 residues: Pantothenate synthetase (281 aa).

30-37 is a binding site for ATP; the sequence is MGYLHEGH. H37 serves as the catalytic Proton donor. A (R)-pantoate-binding site is contributed by Q61. Q61 contacts beta-alanine. 147 to 150 is an ATP binding site; it reads GEKD. Q153 serves as a coordination point for (R)-pantoate. ATP contacts are provided by residues I176 and 184–187; that span reads KSSR.

This sequence belongs to the pantothenate synthetase family. As to quaternary structure, homodimer.

The protein resides in the cytoplasm. The catalysed reaction is (R)-pantoate + beta-alanine + ATP = (R)-pantothenate + AMP + diphosphate + H(+). Its pathway is cofactor biosynthesis; (R)-pantothenate biosynthesis; (R)-pantothenate from (R)-pantoate and beta-alanine: step 1/1. Catalyzes the condensation of pantoate with beta-alanine in an ATP-dependent reaction via a pantoyl-adenylate intermediate. The polypeptide is Pantothenate synthetase (Clostridium botulinum (strain Loch Maree / Type A3)).